Consider the following 321-residue polypeptide: Peptide transport system permease protein SapB (321 aa).

A run of 8 helical transmembrane segments spans residues 8-28, 41-61, 82-102, 117-137, 150-170, 180-200, 249-269, and 289-309; these read HILWVALLLLVLSLLGFVILL, IYIGYFHYLGTLLQGDFGITY, CFITLFLAFIFGLPLGIISAV, YVGLSIPIFWLAPILLYVAAL, LLYEIKSITGFPVIDMWFMEV, ILQHLALPTLVLCILPTMEII, VFTLVLTQCMLVETALGWPGI, and VIVIGVCIILIDTFTKIFTFI. Residues 75–303 enclose the ABC transmembrane type-1 domain; that stretch reads LPPTLELCFI…VCIILIDTFT (229 aa).

This sequence belongs to the binding-protein-dependent transport system permease family. OppBC subfamily.

It is found in the cell inner membrane. Its function is as follows. Involved in a peptide intake transport system that plays a role in the resistance to antimicrobial peptides. The sequence is that of Peptide transport system permease protein SapB (sapB) from Haemophilus influenzae (strain ATCC 51907 / DSM 11121 / KW20 / Rd).